The following is a 368-amino-acid chain: Protein RecA (368 aa).

80 to 87 (GPESSGKT) is an ATP binding site. Residues 344 to 353 (NPTFTATPDS) are compositionally biased toward polar residues. The segment at 344 to 368 (NPTFTATPDSENADNADDEFSEEEL) is disordered. Residues 354 to 368 (ENADNADDEFSEEEL) are compositionally biased toward acidic residues.

Belongs to the RecA family.

The protein localises to the cytoplasm. Its function is as follows. Can catalyze the hydrolysis of ATP in the presence of single-stranded DNA, the ATP-dependent uptake of single-stranded DNA by duplex DNA, and the ATP-dependent hybridization of homologous single-stranded DNAs. It interacts with LexA causing its activation and leading to its autocatalytic cleavage. The sequence is that of Protein RecA from Mannheimia haemolytica (Pasteurella haemolytica).